The chain runs to 135 residues: UPF0355 protein SACOL0457 (135 aa).

The protein belongs to the UPF0355 family.

The sequence is that of UPF0355 protein SACOL0457 from Staphylococcus aureus (strain COL).